The primary structure comprises 356 residues: Dual-specificity RNA methyltransferase RlmN (356 aa).

Glu89 (proton acceptor) is an active-site residue. Positions 108 to 341 (SHARYTICVS…CTIRESKGLD (234 aa)) constitute a Radical SAM core domain. The cysteines at positions 115 and 346 are disulfide-linked. Residues Cys122, Cys126, and Cys129 each contribute to the [4Fe-4S] cluster site. S-adenosyl-L-methionine contacts are provided by residues 172 to 173 (GE), Ser204, 227 to 229 (SLH), and Asn303. Cys346 functions as the S-methylcysteine intermediate in the catalytic mechanism.

It belongs to the radical SAM superfamily. RlmN family. [4Fe-4S] cluster is required as a cofactor.

The protein localises to the cytoplasm. The catalysed reaction is adenosine(2503) in 23S rRNA + 2 reduced [2Fe-2S]-[ferredoxin] + 2 S-adenosyl-L-methionine = 2-methyladenosine(2503) in 23S rRNA + 5'-deoxyadenosine + L-methionine + 2 oxidized [2Fe-2S]-[ferredoxin] + S-adenosyl-L-homocysteine. It catalyses the reaction adenosine(37) in tRNA + 2 reduced [2Fe-2S]-[ferredoxin] + 2 S-adenosyl-L-methionine = 2-methyladenosine(37) in tRNA + 5'-deoxyadenosine + L-methionine + 2 oxidized [2Fe-2S]-[ferredoxin] + S-adenosyl-L-homocysteine. Functionally, specifically methylates position 2 of adenine 2503 in 23S rRNA and position 2 of adenine 37 in tRNAs. m2A2503 modification seems to play a crucial role in the proofreading step occurring at the peptidyl transferase center and thus would serve to optimize ribosomal fidelity. This is Dual-specificity RNA methyltransferase RlmN from Campylobacter jejuni subsp. jejuni serotype O:23/36 (strain 81-176).